Here is a 288-residue protein sequence, read N- to C-terminus: Hypersensitive-induced response protein-like protein 1 (288 aa).

Residue glycine 2 is the site of N-myristoyl glycine attachment.

In terms of biological role, positive regulator of hypersensitive response (HR)-like cell death. May be involved in potassium ion channel regulation. The polypeptide is Hypersensitive-induced response protein-like protein 1 (Oryza sativa subsp. japonica (Rice)).